A 336-amino-acid polypeptide reads, in one-letter code: Dihydroorotate dehydrogenase (quinone) (336 aa).

FMN is bound by residues 62–66 and T86; that span reads AGLDK. K66 contacts substrate. Substrate is bound at residue 111–115; it reads NRMGF. FMN contacts are provided by N139 and N172. Position 172 (N172) interacts with substrate. S175 functions as the Nucleophile in the catalytic mechanism. Residue N177 participates in substrate binding. Positions 217 and 245 each coordinate FMN. Position 246–247 (246–247) interacts with substrate; it reads NT. Residues G268, G297, and 318–319 contribute to the FMN site; that span reads YS.

Belongs to the dihydroorotate dehydrogenase family. Type 2 subfamily. As to quaternary structure, monomer. It depends on FMN as a cofactor.

The protein localises to the cell membrane. The catalysed reaction is (S)-dihydroorotate + a quinone = orotate + a quinol. It functions in the pathway pyrimidine metabolism; UMP biosynthesis via de novo pathway; orotate from (S)-dihydroorotate (quinone route): step 1/1. Its function is as follows. Catalyzes the conversion of dihydroorotate to orotate with quinone as electron acceptor. The protein is Dihydroorotate dehydrogenase (quinone) of Hamiltonella defensa subsp. Acyrthosiphon pisum (strain 5AT).